Consider the following 166-residue polypeptide: Keratin, type II cytoskeletal 68 kDa, component IB (166 aa).

An IF rod domain is found at 1 to 41; sequence EAKDDLARLLRDYQDAMNVKLALDVEIATYRKLLEGEECRM. The interval 1–41 is coil 2B; sequence EAKDDLARLLRDYQDAMNVKLALDVEIATYRKLLEGEECRM. Residues 42–166 are tail; it reads SGECPSAVSI…FSQSSQRTSR (125 aa). Residues 122–146 show a composition bias toward gly residues; the sequence is GFGGGSSGFGSGSGGRSGVSGGGLS. Positions 122 to 166 are disordered; that stretch reads GFGGGSSGFGSGSGGRSGVSGGGLSSGSSRGGSVRFSQSSQRTSR. The segment covering 147-166 has biased composition (low complexity); sequence SGSSRGGSVRFSQSSQRTSR.

This sequence belongs to the intermediate filament family. Heterotetramer of two type I and two type II keratins.

The protein is Keratin, type II cytoskeletal 68 kDa, component IB of Bos taurus (Bovine).